The primary structure comprises 421 residues: ATP-dependent RNA helicase RhlB (421 aa).

The short motif at 9-37 (QKFSDFALHPKVIEALENKGFHNCTPIQA) is the Q motif element. The region spanning 40–219 (LPLTLAGRDV…FEQMNNAEYV (180 aa)) is the Helicase ATP-binding domain. Position 53–60 (53–60 (AQTGTGKT)) interacts with ATP. Positions 165–168 (DEAD) match the DEAD box motif. The region spanning 245 to 390 (RLLQTLIEEE…VSKYNPEALM (146 aa)) is the Helicase C-terminal domain. The segment at 393–421 (LPKPLRLTRSRPGNGPRRTGAPRNRRRSG) is disordered. Over residues 403–414 (RPGNGPRRTGAP) the composition is skewed to low complexity.

This sequence belongs to the DEAD box helicase family. RhlB subfamily. As to quaternary structure, component of the RNA degradosome, which is a multiprotein complex involved in RNA processing and mRNA degradation.

It is found in the cytoplasm. It catalyses the reaction ATP + H2O = ADP + phosphate + H(+). Functionally, DEAD-box RNA helicase involved in RNA degradation. Has RNA-dependent ATPase activity and unwinds double-stranded RNA. In Citrobacter koseri (strain ATCC BAA-895 / CDC 4225-83 / SGSC4696), this protein is ATP-dependent RNA helicase RhlB.